An 84-amino-acid chain; its full sequence is Beta-defensin 119 (84 aa).

Residues 1–21 form the signal peptide; sequence MKLLYLFLAILLAIEEPVISG. Disulfide bonds link cysteine 28/cysteine 55, cysteine 35/cysteine 49, and cysteine 39/cysteine 56.

Belongs to the beta-defensin family. In terms of tissue distribution, abundant expression in the male reproductive tract only. Abundant expressed in testis and the caput region of epididymis, but low in the corpus region.

It is found in the secreted. Its function is as follows. Has antibacterial activity. This chain is Beta-defensin 119 (DEFB119), found in Homo sapiens (Human).